Reading from the N-terminus, the 458-residue chain is Argininosuccinate lyase (458 aa).

It belongs to the lyase 1 family. Argininosuccinate lyase subfamily.

The protein resides in the cytoplasm. The catalysed reaction is 2-(N(omega)-L-arginino)succinate = fumarate + L-arginine. Its pathway is amino-acid biosynthesis; L-arginine biosynthesis; L-arginine from L-ornithine and carbamoyl phosphate: step 3/3. The polypeptide is Argininosuccinate lyase (Glaesserella parasuis serovar 5 (strain SH0165) (Haemophilus parasuis)).